A 943-amino-acid polypeptide reads, in one-letter code: Synaptotagmin-like protein 2 (943 aa).

Positions 1–57 (MIDLSFLTEEEQEAIMKVLQRDAALKRAEEERVRHLPEKVKDDQQLKNMSGQWFYEA) constitute a RabBD domain. 3 disordered regions span residues 77–99 (RKKRPQVADEQSKDRANRAKESW), 118–291 (EEPE…VRFH), and 361–613 (ESDR…SNSG). Residues 82–99 (QVADEQSKDRANRAKESW) show a composition bias toward basic and acidic residues. Positions 125 to 138 (APASPSSSVVNPVS) are enriched in low complexity. Residues 174–192 (SQQTKNEQSKNGKTGLFQT) are compositionally biased toward polar residues. The span at 194-205 (KEGELSESKEES) shows a compositional bias: basic and acidic residues. Polar residues-rich tracts occupy residues 382–394 (PQPSQYTNGLPFQ), 404–416 (KNETSQPTTSGSF), and 426–440 (EFLTTRAQSTENSHT). Residues 524–537 (ELVRSAEDDQKADQ) show a composition bias toward basic and acidic residues. Over residues 549–560 (STVSSQPDNQFS) the composition is skewed to polar residues. The span at 603–613 (SSLTNLSSNSG) shows a compositional bias: low complexity. C2 domains lie at 637–762 (VKGS…LKWY) and 777–906 (NRGE…VDWM).

In terms of assembly, monomer. Binds NRXN1. Binds RAB27A that has been activated by GTP-binding via its N-terminus. Interacts with RAB27B.

The protein localises to the cell membrane. May act as a RAB27A effector protein and play a role in cytotoxic granule exocytosis in lymphocytes. The sequence is that of Synaptotagmin-like protein 2 (SYTL2) from Bos taurus (Bovine).